The following is a 106-amino-acid chain: Glycoprotein GP16 (106 aa).

Glycosylated.

It is found in the host cytoplasm. Functionally, may be involved in formation or transport of the nucleocapsid-containing vesicles around the nuclear membrane. This chain is Glycoprotein GP16 (GP16), found in Autographa californica nuclear polyhedrosis virus (AcMNPV).